The primary structure comprises 226 residues: UPF0173 metal-dependent hydrolase CTN_1413 (226 aa).

Belongs to the UPF0173 family.

This chain is UPF0173 metal-dependent hydrolase CTN_1413, found in Thermotoga neapolitana (strain ATCC 49049 / DSM 4359 / NBRC 107923 / NS-E).